Consider the following 188-residue polypeptide: Probable RNA 2'-phosphotransferase (188 aa).

It belongs to the KptA/TPT1 family.

Its function is as follows. Removes the 2'-phosphate from RNA via an intermediate in which the phosphate is ADP-ribosylated by NAD followed by a presumed transesterification to release the RNA and generate ADP-ribose 1''-2''-cyclic phosphate (APPR&gt;P). May function as an ADP-ribosylase. In Pseudomonas savastanoi pv. phaseolicola (strain 1448A / Race 6) (Pseudomonas syringae pv. phaseolicola (strain 1448A / Race 6)), this protein is Probable RNA 2'-phosphotransferase.